The following is a 225-amino-acid chain: uncharacterized protein (225 aa).

Transmembrane regions (helical) follow at residues 1–21 (MFIGIVSLFLTVLVYLGAKKV), 31–51 (SPLLVTPAVLVGLLLLVNVPY), 56–76 (LGGGLLTDMLQPATVAFAIPL), 88–108 (VEIILNVAVGSCIAIISTALI), 145–165 (VTAVFVILTALLGTVIGPMVI), and 205–225 (VSMILAAIMTLCAAPFLLSFM).

Belongs to the YohK (E.coli)/YwbG (IPA-22R) (B.subtilis) family.

Its subcellular location is the cell membrane. This is an uncharacterized protein from Bacillus subtilis (strain 168).